The following is a 144-amino-acid chain: Transmembrane protein 170A (144 aa).

Residues 1-50 are Extracellular-facing; sequence MEREGSGGGGGSAGLLQQILSLKLVPRVGNGTLCPNSTSLCSFPEMWYGV. Asn30 and Asn36 each carry an N-linked (GlcNAc...) asparagine glycan. A helical transmembrane segment spans residues 51-71; that stretch reads FLWALMSSVFFHVPAGLLALF. Over 72-85 the chain is Cytoplasmic; it reads TLRHHKYGRFMSVS. Residues 86–106 form a helical membrane-spanning segment; it reads ILLMGIVGPITAGILTSAAIA. Residues 107 to 116 are Extracellular-facing; that stretch reads GVYRAAGKEM. Residues 117–137 form a helical membrane-spanning segment; the sequence is IPFEALTLGTGQTFCVVVVSF. Over 138 to 144 the chain is Cytoplasmic; that stretch reads LRVLATL.

The protein belongs to the TMEM170 family. Interacts with RTN4.

Its subcellular location is the endoplasmic reticulum membrane. It is found in the nucleus envelope. Functionally, acts as a regulator of endoplasmic reticulum (ER) and nuclear envelope (NE) morphogenesis. Affects the ratio between tubular ER and ER sheets by promoting sheet formation at the expense of tubules. Influences NE expansion, nuclear pore complex formation and proper localization of inner nuclear membrane proteins. This is Transmembrane protein 170A (Tmem170a) from Mus musculus (Mouse).